We begin with the raw amino-acid sequence, 493 residues long: MKNKKEIYYRKKKLEEMRKNENIFPNNFRQNTTIKNIKKNYKKNDKEYFKNNKIIISIAGRIISIRVMGKSSFLEIRNIESKIQIYISENNISKNKYKKIIKQLDIGDIIGVLGVLFKTNTEELSVKCKKLYVLTKSVKPFPNKFQGLLNQEICYRKRYLDLITNKKSRNTFKTRSIIINNIRKFMIKENFVEVETPMMHNIPGGGLSKPFITHHSSLNIDLYLRIAPELYLKQLIVGGFEKIFEINRNFRNEGLSSNHNPEFTMMEFYVAYIDYEDLMKIVENLLNYIVDKIFNKNKINYNNFMINFEKPFKKISMQDSICEYCKNVTQSDISDIKIITDIAKSFNITVEKNWGVGKLQEKIFSEKVEKNLIQPTFVIDYPTEISPLARAKKNNKLITDRFELFVCGNEIGNGFSELNDPKEQKNRFLEQLKNKTLEEQNIFYDKDYITSLEYGLPPTAGCGIGIDRLVMILTNNYSIKDVILFPTLRNANK.

Mg(2+) contacts are provided by Glu403 and Glu410.

This sequence belongs to the class-II aminoacyl-tRNA synthetase family. As to quaternary structure, homodimer. It depends on Mg(2+) as a cofactor.

Its subcellular location is the cytoplasm. The catalysed reaction is tRNA(Lys) + L-lysine + ATP = L-lysyl-tRNA(Lys) + AMP + diphosphate. In Wigglesworthia glossinidia brevipalpis, this protein is Lysine--tRNA ligase.